The sequence spans 1080 residues: Ubiquitin-activating enzyme E1 1 (1080 aa).

The segment covering 1–14 has biased composition (basic and acidic residues); the sequence is MLHKRASEANDKND. Disordered regions lie at residues 1-20 and 29-50; these read MLHK…IIGS and RIDF…GSSR. Over residues 38–49 the composition is skewed to low complexity; sequence DKSSSILASGSS. Residues Ala-502, Asp-528, Arg-539, Lys-552, and 600-601 each bind ATP; that span reads DN. Residue Cys-656 is the Glycyl thioester intermediate of the active site.

It belongs to the ubiquitin-activating E1 family. As to quaternary structure, monomer. Expressed in leaves, flowers, roots and stems. Detected in germinating seeds, cotyledons, hypocotyls, vascular tissues, anthers, filaments, pollen, style, stigma, sepals, petals, ovary, developing ovules, funiculi and silique walls.

It catalyses the reaction ATP + ubiquitin + [E1 ubiquitin-activating enzyme]-L-cysteine = AMP + diphosphate + S-ubiquitinyl-[E1 ubiquitin-activating enzyme]-L-cysteine.. The protein operates within protein modification; protein ubiquitination. Its function is as follows. Activates ubiquitin by first adenylating its C-terminal glycine residue with ATP, and thereafter linking this residue to the side chain of a cysteine residue in E1, yielding a ubiquitin-E1 thioester and free AMP. The protein is Ubiquitin-activating enzyme E1 1 (UBA1) of Arabidopsis thaliana (Mouse-ear cress).